The sequence spans 204 residues: Cell wall protein RHD3 (204 aa).

Residues 1–15 (MKFLAILSLSSSALA) form the signal peptide. The GPI-anchor amidated glycine moiety is linked to residue Gly182. A propeptide spans 183–204 (AAGQNKLSYGVGMAAVVAGLVM) (removed in mature form).

This sequence belongs to the SRP1/TIP1 family. The GPI-anchor is attached to the protein in the endoplasmic reticulum and serves to target the protein to the cell surface. There, the glucosamine-inositol phospholipid moiety is cleaved off and the GPI-modified mannoprotein is covalently attached via its lipidless GPI glycan remnant to the 1,6-beta-glucan of the outer cell wall layer. Post-translationally, O-glycosylated by PMT1.

Its subcellular location is the secreted. The protein localises to the cell wall. It localises to the membrane. Functionally, component of the cell wall involved in virulence. Does not seem to have a major role in maintaining cell wall integrity but plays a role in the relationship between C.albicans and the host. In Candida albicans (strain SC5314 / ATCC MYA-2876) (Yeast), this protein is Cell wall protein RHD3 (RHD3).